Here is a 381-residue protein sequence, read N- to C-terminus: Pentraxin-related protein PTX3 (381 aa).

The N-terminal stretch at 1 to 17 (MHLLAILFCALWSAVLA) is a signal peptide. 2 coiled-coil regions span residues 74–101 (LQAT…SLAR) and 143–167 (EEAG…HAVQ). Disulfide bonds link cysteine 179–cysteine 357 and cysteine 210–cysteine 271. The region spanning 179-381 (CETAILFPMR…QPHGGAQYVS (203 aa)) is the Pentraxin (PTX) domain. Asparagine 220 carries an N-linked (GlcNAc...) asparagine glycan.

As to quaternary structure, homooctamer; disulfide-linked. Binds to C1q. (Microbial infection) Interacts with SARS coronavirus-2/SARS-CoV-2 Nucleoprotein and Spike protein homotrimer. In terms of processing, glycosylated.

The protein resides in the secreted. Plays a role in the regulation of innate resistance to pathogens, inflammatory reactions, possibly clearance of self-components and female fertility. In Homo sapiens (Human), this protein is Pentraxin-related protein PTX3.